Consider the following 274-residue polypeptide: Bis(5'-nucleosyl)-tetraphosphatase, symmetrical (274 aa).

The protein belongs to the Ap4A hydrolase family.

It carries out the reaction P(1),P(4)-bis(5'-adenosyl) tetraphosphate + H2O = 2 ADP + 2 H(+). In terms of biological role, hydrolyzes diadenosine 5',5'''-P1,P4-tetraphosphate to yield ADP. The polypeptide is Bis(5'-nucleosyl)-tetraphosphatase, symmetrical (Janthinobacterium sp. (strain Marseille) (Minibacterium massiliensis)).